The primary structure comprises 490 residues: Glutathione hydrolase 6 (490 aa).

Over 1–52 (MEPEAGPVLYQKLRVWEPSLESEEEEEEISEQLILDASGPHDSSGNKAGRLP) the chain is Cytoplasmic. The chain crosses the membrane as a helical; Signal-anchor for type II membrane protein span at residues 53-73 (GAWAQLVAALLLLAIGFSLAV). Topologically, residues 74–490 (RQLCSSGASP…PSGCCPFQGF (417 aa)) are extracellular. N-linked (GlcNAc...) asparagine glycans are attached at residues Asn-160, Asn-165, and Asn-374.

This sequence belongs to the gamma-glutamyltransferase family. In terms of assembly, heterodimer composed of the light and heavy chains. The active site is located in the light chain. Post-translationally, cleaved by autocatalysis into a large and a small subunit and the autocatalytic cleavage is essential to the functional activation of the enzyme.

It is found in the membrane. The catalysed reaction is an N-terminal (5-L-glutamyl)-[peptide] + an alpha-amino acid = 5-L-glutamyl amino acid + an N-terminal L-alpha-aminoacyl-[peptide]. The enzyme catalyses glutathione + H2O = L-cysteinylglycine + L-glutamate. It carries out the reaction an S-substituted glutathione + H2O = an S-substituted L-cysteinylglycine + L-glutamate. Its pathway is sulfur metabolism; glutathione metabolism. Hydrolyzes and transfers gamma-glutamyl moieties from glutathione and other gamma-glutamyl compounds to acceptors. This is Glutathione hydrolase 6 from Bos taurus (Bovine).